Consider the following 218-residue polypeptide: Ras-related protein Rab-27B (218 aa).

Thr2 bears the N-acetylthreonine mark. 16 to 24 contributes to the GTP binding site; that stretch reads GDSGVGKTT. The Effector region motif lies at 38 to 46; that stretch reads FITTVGIDF. GTP is bound by residues 74–78, 133–136, and 163–165; these read DTAGQ, NKAD, and SAA. The cysteines at positions 123 and 188 are disulfide-linked. The disordered stretch occupies residues 193 to 218; it reads HIPDTVNGSSSGKLDGEKSAEKKCAC. The segment covering 206 to 218 has biased composition (basic and acidic residues); it reads LDGEKSAEKKCAC. S-geranylgeranyl cysteine attachment occurs at residues Cys216 and Cys218. Residue Cys218 is modified to Cysteine methyl ester.

Belongs to the small GTPase superfamily. Rab family. In terms of assembly, interacts with SYTL2, SYTL4, MYRIP and MLPH. Interacts with RPH3A and RPH3A. Interacts (GDP-bound form preferentially) with DENND10. As to expression, expressed at an extraordinary high level (0.1% of total protein) in urothelium.

It localises to the membrane. It is found in the late endosome. The catalysed reaction is GTP + H2O = GDP + phosphate + H(+). With respect to regulation, regulated by guanine nucleotide exchange factors (GEFs) which promote the exchange of bound GDP for free GTP, GTPase activating proteins (GAPs) which increase the GTP hydrolysis activity, and GDP dissociation inhibitors which inhibit the dissociation of the nucleotide from the GTPase. Activated by GEFs such as DENND10. Small GTPase which cycles between active GTP-bound and inactive GDP-bound states. In its active state, binds to a variety of effector proteins to regulate homeostasis of late endocytic pathway, including endosomal positioning, maturation and secretion. Plays a role in NTRK2/TRKB axonal anterograde transport by facilitating the association of NTRK2/TRKB with KLC1. May be involved in targeting uroplakins to urothelial apical membranes. The polypeptide is Ras-related protein Rab-27B (RAB27B) (Bos taurus (Bovine)).